The sequence spans 201 residues: Adenylyl-sulfate kinase (201 aa).

An ATP-binding site is contributed by 35–42 (GLSGSGKS). The Phosphoserine intermediate role is filled by Ser109.

The protein belongs to the APS kinase family.

It carries out the reaction adenosine 5'-phosphosulfate + ATP = 3'-phosphoadenylyl sulfate + ADP + H(+). The protein operates within sulfur metabolism; hydrogen sulfide biosynthesis; sulfite from sulfate: step 2/3. Catalyzes the synthesis of activated sulfate. In Bacteroides thetaiotaomicron (strain ATCC 29148 / DSM 2079 / JCM 5827 / CCUG 10774 / NCTC 10582 / VPI-5482 / E50), this protein is Adenylyl-sulfate kinase.